Here is a 202-residue protein sequence, read N- to C-terminus: Inner membrane-spanning protein YciB (202 aa).

A run of 6 helical transmembrane segments spans residues 3 to 23, 46 to 66, 73 to 93, 100 to 120, 145 to 165, and 173 to 193; these read ILFD…AGGN, ILLA…WVWM, TMLW…LFFH, WKPT…AVIF, LAWA…AYNF, and FKLF…GFYL.

The protein belongs to the YciB family.

It is found in the cell inner membrane. Plays a role in cell envelope biogenesis, maintenance of cell envelope integrity and membrane homeostasis. The chain is Inner membrane-spanning protein YciB from Aromatoleum aromaticum (strain DSM 19018 / LMG 30748 / EbN1) (Azoarcus sp. (strain EbN1)).